Reading from the N-terminus, the 198-residue chain is Carnitine operon protein CaiE (198 aa).

The interval 179–198 is disordered; that stretch reads VEENRPRLKGTTDVKPKSAQ. Over residues 180–198 the composition is skewed to basic and acidic residues; sequence EENRPRLKGTTDVKPKSAQ.

This sequence belongs to the transferase hexapeptide repeat family.

It participates in amine and polyamine metabolism; carnitine metabolism. Functionally, overproduction of CaiE stimulates the activity of CaiB and CaiD. The polypeptide is Carnitine operon protein CaiE (Salmonella typhi).